The following is a 409-amino-acid chain: FBD-associated F-box protein At4g10400 (409 aa).

Residues 1-47 enclose the F-box domain; sequence MDRISGLPDEVLVKILSFVPTKVAVSTSILSKRWEFLWMWLTKLKFG. The 50-residue stretch at 330-379 folds into the FBD domain; sequence SWNQPSIVPECMLSSLQKFTWFKYLGRPQDRDIAVYILKNACRLRTATIK.

In Arabidopsis thaliana (Mouse-ear cress), this protein is FBD-associated F-box protein At4g10400.